A 333-amino-acid polypeptide reads, in one-letter code: Methylosome protein WDR77 (333 aa).

7 WD repeats span residues 16–59 (CMEV…GAPN), 68–106 (QTEAGVTDVAWVSEKGILVASDSGAVELWEILEKESLLV), 113–152 (EHDDIVKTLSVFSDGTQAVSGGKDFSVKVWDLSQKAVLKS), 155–195 (AHSS…PATR), 199–240 (CASD…SAQT), 243–283 (VHSQ…VFRD), and 285–328 (SHRD…NLIA).

As to quaternary structure, heterotetramer; dimer of heterodimer with prmt5. Interacts with histone h2a and h4 and with nucleoplasmin. Detected in egg (at protein level).

Its subcellular location is the cytoplasm. It is found in the nucleus. In terms of biological role, non-catalytic component of the 20S prmt5-containing methyltransferase complex, which modifies specific arginines to dimethylarginines in several spliceosomal Sm proteins and histones. Required for normal prmt5 methyltransferase activity. The protein is Methylosome protein WDR77 of Xenopus laevis (African clawed frog).